Reading from the N-terminus, the 446-residue chain is 3-phosphoshikimate 1-carboxyvinyltransferase (446 aa).

Lys-27, Ser-28, and Arg-32 together coordinate 3-phosphoshikimate. Lys-27 is a phosphoenolpyruvate binding site. The phosphoenolpyruvate site is built by Gly-100 and Arg-128. 3-phosphoshikimate-binding residues include Ser-177, Gln-179, Asp-330, and Lys-357. Phosphoenolpyruvate is bound at residue Gln-179. Asp-330 serves as the catalytic Proton acceptor. 2 residues coordinate phosphoenolpyruvate: Arg-361 and Arg-406.

It belongs to the EPSP synthase family. Monomer.

It localises to the cytoplasm. The catalysed reaction is 3-phosphoshikimate + phosphoenolpyruvate = 5-O-(1-carboxyvinyl)-3-phosphoshikimate + phosphate. The protein operates within metabolic intermediate biosynthesis; chorismate biosynthesis; chorismate from D-erythrose 4-phosphate and phosphoenolpyruvate: step 6/7. Its function is as follows. Catalyzes the transfer of the enolpyruvyl moiety of phosphoenolpyruvate (PEP) to the 5-hydroxyl of shikimate-3-phosphate (S3P) to produce enolpyruvyl shikimate-3-phosphate and inorganic phosphate. This Sphingopyxis alaskensis (strain DSM 13593 / LMG 18877 / RB2256) (Sphingomonas alaskensis) protein is 3-phosphoshikimate 1-carboxyvinyltransferase.